The sequence spans 185 residues: Large ribosomal subunit protein uL15 (185 aa).

The tract at residues 1-51 (MDLSSLRPAAGAVKNKKRVGRGQGSGNGTTAGKGNKGQQARSGYQKPINEG) is disordered. Over residues 21–35 (RGQGSGNGTTAGKGN) the composition is skewed to gly residues.

The protein belongs to the universal ribosomal protein uL15 family. Part of the 50S ribosomal subunit.

Its function is as follows. Binds to the 23S rRNA. The polypeptide is Large ribosomal subunit protein uL15 (Chlorobium phaeobacteroides (strain DSM 266 / SMG 266 / 2430)).